Here is a 210-residue protein sequence, read N- to C-terminus: Guanylate kinase (210 aa).

Positions 6 to 186 (GLLGIISAPS…ALIYLQSVIL (181 aa)) constitute a Guanylate kinase-like domain. 13 to 20 (APSGAGKS) lines the ATP pocket.

This sequence belongs to the guanylate kinase family.

Its subcellular location is the cytoplasm. The catalysed reaction is GMP + ATP = GDP + ADP. Essential for recycling GMP and indirectly, cGMP. The polypeptide is Guanylate kinase (Blochmanniella floridana).